A 313-amino-acid chain; its full sequence is Homoserine O-succinyltransferase (313 aa).

Cys-142 functions as the Acyl-thioester intermediate in the catalytic mechanism. 2 residues coordinate substrate: Lys-163 and Ser-192. His-235 acts as the Proton acceptor in catalysis. Residue Glu-237 is part of the active site. Arg-249 lines the substrate pocket.

This sequence belongs to the MetA family.

The protein localises to the cytoplasm. It catalyses the reaction L-homoserine + succinyl-CoA = O-succinyl-L-homoserine + CoA. It participates in amino-acid biosynthesis; L-methionine biosynthesis via de novo pathway; O-succinyl-L-homoserine from L-homoserine: step 1/1. In terms of biological role, transfers a succinyl group from succinyl-CoA to L-homoserine, forming succinyl-L-homoserine. The sequence is that of Homoserine O-succinyltransferase from Aliivibrio fischeri (strain MJ11) (Vibrio fischeri).